The following is a 202-amino-acid chain: Putative 3-methyladenine DNA glycosylase (202 aa).

It belongs to the DNA glycosylase MPG family.

The sequence is that of Putative 3-methyladenine DNA glycosylase from Staphylococcus aureus (strain bovine RF122 / ET3-1).